The primary structure comprises 540 residues: Beta-glucosidase 1B (540 aa).

3 residues coordinate substrate: Gln-25, His-128, and Asn-174. Glu-175 (proton donor) is an active-site residue. A substrate-binding site is contributed by Tyr-316. The active-site Nucleophile is Glu-380. Residues Trp-430 and 437–438 (EW) each bind substrate. Over residues 481–492 (PAAETKKAATPS) the composition is skewed to low complexity. Residues 481–524 (PAAETKKAATPSPLKPHGAISNGVSKKSSATKEPKSASRKKGRK) are disordered.

Belongs to the glycosyl hydrolase 1 family.

The catalysed reaction is Hydrolysis of terminal, non-reducing beta-D-glucosyl residues with release of beta-D-glucose.. In terms of biological role, plays an important role in cellulose degradation. Shows hydrolytic activity against several glycosidic compounds. The chain is Beta-glucosidase 1B from Phanerodontia chrysosporium (White-rot fungus).